The chain runs to 539 residues: Eukaryotic translation initiation factor 3 subunit L (539 aa).

The 209-residue stretch at 306 to 514 folds into the PCI domain; the sequence is TFSDILLYVQ…IHIADTKVSH (209 aa).

It belongs to the eIF-3 subunit L family. As to quaternary structure, component of the eukaryotic translation initiation factor 3 (eIF-3) complex. The eIF-3 complex interacts with pix.

The protein resides in the cytoplasm. Its function is as follows. Component of the eukaryotic translation initiation factor 3 (eIF-3) complex, which is involved in protein synthesis of a specialized repertoire of mRNAs and, together with other initiation factors, stimulates binding of mRNA and methionyl-tRNAi to the 40S ribosome. The eIF-3 complex specifically targets and initiates translation of a subset of mRNAs involved in cell proliferation. This Drosophila willistoni (Fruit fly) protein is Eukaryotic translation initiation factor 3 subunit L.